A 564-amino-acid polypeptide reads, in one-letter code: Septin-9 (564 aa).

Met-1 is subject to N-acetylmethionine. Ser-12 is modified (phosphoserine). Phosphothreonine is present on residues Thr-24 and Thr-31. 2 disordered regions span residues 38-165 (VASS…PVTD) and 178-224 (PAEA…DSEV). Lys-44 is modified (N6-acetyllysine). Phosphoserine occurs at positions 64, 67, and 71. The segment covering 95 to 109 (DISSKQVESTASTPG) has biased composition (polar residues). Over residues 116-134 (KRAEVLGHKTPEPVPRRTE) the composition is skewed to basic and acidic residues. The residue at position 125 (Thr-125) is a Phosphothreonine. Over residues 190–203 (TLENSEAPMSQLQS) the composition is skewed to polar residues. Residue Tyr-258 is modified to Phosphotyrosine. The region spanning 275 to 546 (QGFEFNIMVV…EAYRVKRLNE (272 aa)) is the Septin-type G domain. The tract at residues 285-292 (GQSGLGKS) is G1 motif. 285–292 (GQSGLGKS) is a GTP binding site. Phosphoserine occurs at positions 307 and 312. Residues Thr-319, Gly-345, 425–433 (KADTLTLEE), Gly-480, and Arg-495 each bind GTP. The segment at 342 to 345 (DTPG) is G3 motif. The tract at residues 424 to 427 (AKAD) is G4 motif.

Belongs to the TRAFAC class TrmE-Era-EngA-EngB-Septin-like GTPase superfamily. Septin GTPase family. As to quaternary structure, septins polymerize into heterooligomeric protein complexes that form filaments, and associate with cellular membranes, actin filaments, and microtubules. GTPase activity is required for filament formation. Interacts with SEPTIN2, SEPTIN6, SEPTIN7, SEPTIN11 and SEPTIN14. Interacts with RTKN and ARHGEF18. As to expression, expressed in the brain, mainly in the perikarya and processes of astrocytes in the cerebellum, dentate gyrus and corpus callosum (at protein level). In the sciatic nerve, highly expressed in Schwann cells (at protein level). Isoforms are differentially expressed in testes, kidney, liver, heart, spleen and brain. Undetectable in skeletal muscle.

It localises to the cytoplasm. The protein resides in the cytoskeleton. Its function is as follows. Filament-forming cytoskeletal GTPase. May play a role in cytokinesis (Potential). The sequence is that of Septin-9 from Rattus norvegicus (Rat).